The chain runs to 494 residues: Aspartyl/glutamyl-tRNA(Asn/Gln) amidotransferase subunit B (494 aa).

This sequence belongs to the GatB/GatE family. GatB subfamily. Heterotrimer of A, B and C subunits.

It catalyses the reaction L-glutamyl-tRNA(Gln) + L-glutamine + ATP + H2O = L-glutaminyl-tRNA(Gln) + L-glutamate + ADP + phosphate + H(+). The catalysed reaction is L-aspartyl-tRNA(Asn) + L-glutamine + ATP + H2O = L-asparaginyl-tRNA(Asn) + L-glutamate + ADP + phosphate + 2 H(+). Allows the formation of correctly charged Asn-tRNA(Asn) or Gln-tRNA(Gln) through the transamidation of misacylated Asp-tRNA(Asn) or Glu-tRNA(Gln) in organisms which lack either or both of asparaginyl-tRNA or glutaminyl-tRNA synthetases. The reaction takes place in the presence of glutamine and ATP through an activated phospho-Asp-tRNA(Asn) or phospho-Glu-tRNA(Gln). The chain is Aspartyl/glutamyl-tRNA(Asn/Gln) amidotransferase subunit B from Synechococcus sp. (strain CC9902).